A 47-amino-acid polypeptide reads, in one-letter code: Defensin-like protein 2 (47 aa).

Intrachain disulfides connect Cys3–Cys47, Cys14–Cys36, Cys20–Cys41, and Cys24–Cys43.

It belongs to the DEFL family.

This is Defensin-like protein 2 from Zea mays (Maize).